Here is a 409-residue protein sequence, read N- to C-terminus: Histone deacetylase 7 (409 aa).

A histone deacetylase region spans residues 11 to 324 (RVSYFYEPMI…WCYETAIAVG (314 aa)). The Proton donor/acceptor role is filled by His-148. Zn(2+) is bound at residue Asp-267. The segment at 383–409 (PFQDTPSSSQATEAAEVDMEKRNDPRI) is disordered. The span at 384 to 394 (FQDTPSSSQAT) shows a compositional bias: polar residues. The segment covering 400-409 (DMEKRNDPRI) has biased composition (basic and acidic residues).

It belongs to the histone deacetylase family. HD type 1 subfamily. Zn(2+) is required as a cofactor. As to expression, low expression in flowers.

The protein localises to the nucleus. It carries out the reaction N(6)-acetyl-L-lysyl-[histone] + H2O = L-lysyl-[histone] + acetate. In terms of biological role, responsible for the deacetylation of lysine residues on the N-terminal part of the core histones (H2A, H2B, H3 and H4). Histone deacetylation gives a tag for epigenetic repression and plays an important role in transcriptional regulation, cell cycle progression and developmental events. May be involved in flowering induction. Histone deacetylases act via the formation of large multiprotein complexes. In Arabidopsis thaliana (Mouse-ear cress), this protein is Histone deacetylase 7 (HDA7).